The sequence spans 451 residues: D-inositol 3-phosphate glycosyltransferase (451 aa).

His-37 is a 1D-myo-inositol 3-phosphate binding site. UDP-N-acetyl-alpha-D-glucosamine-binding positions include 43 to 44 (QP) and Gly-51. Residues 48–53 (DAGGMN), Lys-106, Tyr-138, Thr-162, and Arg-182 contribute to the 1D-myo-inositol 3-phosphate site. Positions 259, 264, and 323 each coordinate UDP-N-acetyl-alpha-D-glucosamine. Mg(2+) contacts are provided by Tyr-332, Arg-333, and Ala-335. UDP-N-acetyl-alpha-D-glucosamine is bound by residues Glu-345 and Glu-353. Thr-359 contacts Mg(2+).

It belongs to the glycosyltransferase group 1 family. MshA subfamily. As to quaternary structure, homodimer.

The enzyme catalyses 1D-myo-inositol 3-phosphate + UDP-N-acetyl-alpha-D-glucosamine = 1D-myo-inositol 2-acetamido-2-deoxy-alpha-D-glucopyranoside 3-phosphate + UDP + H(+). In terms of biological role, catalyzes the transfer of a N-acetyl-glucosamine moiety to 1D-myo-inositol 3-phosphate to produce 1D-myo-inositol 2-acetamido-2-deoxy-glucopyranoside 3-phosphate in the mycothiol biosynthesis pathway. The chain is D-inositol 3-phosphate glycosyltransferase from Corynebacterium kroppenstedtii (strain DSM 44385 / JCM 11950 / CIP 105744 / CCUG 35717).